The following is a 557-amino-acid chain: Dihydroxy-acid dehydratase (557 aa).

Position 49 (Cys-49) interacts with [2Fe-2S] cluster. Asp-81 contacts Mg(2+). [2Fe-2S] cluster is bound at residue Cys-122. Asp-123 and Lys-124 together coordinate Mg(2+). At Lys-124 the chain carries N6-carboxylysine. Cys-194 is a [2Fe-2S] cluster binding site. Position 446 (Glu-446) interacts with Mg(2+). Ser-472 serves as the catalytic Proton acceptor.

The protein belongs to the IlvD/Edd family. As to quaternary structure, homodimer. [2Fe-2S] cluster is required as a cofactor. It depends on Mg(2+) as a cofactor.

It catalyses the reaction (2R)-2,3-dihydroxy-3-methylbutanoate = 3-methyl-2-oxobutanoate + H2O. The catalysed reaction is (2R,3R)-2,3-dihydroxy-3-methylpentanoate = (S)-3-methyl-2-oxopentanoate + H2O. Its pathway is amino-acid biosynthesis; L-isoleucine biosynthesis; L-isoleucine from 2-oxobutanoate: step 3/4. It functions in the pathway amino-acid biosynthesis; L-valine biosynthesis; L-valine from pyruvate: step 3/4. Functions in the biosynthesis of branched-chain amino acids. Catalyzes the dehydration of (2R,3R)-2,3-dihydroxy-3-methylpentanoate (2,3-dihydroxy-3-methylvalerate) into 2-oxo-3-methylpentanoate (2-oxo-3-methylvalerate) and of (2R)-2,3-dihydroxy-3-methylbutanoate (2,3-dihydroxyisovalerate) into 2-oxo-3-methylbutanoate (2-oxoisovalerate), the penultimate precursor to L-isoleucine and L-valine, respectively. This chain is Dihydroxy-acid dehydratase, found in Prochlorococcus marinus (strain AS9601).